The chain runs to 76 residues: Zinc finger protein 706 (76 aa).

Low complexity predominate over residues 1–13 (MARGQQKIQSQQK). Disordered regions lie at residues 1–32 (MARG…QKAA) and 53–76 (TFKQ…DVQA). Residues 14 to 25 (NAKKQAGQKKKQ) show a composition bias toward basic residues. The segment at 39-62 (YTCTVCRTQMPDPKTFKQHFESKH) adopts a C2H2-type zinc-finger fold. Residues 53 to 62 (TFKQHFESKH) are compositionally biased toward basic and acidic residues.

Its subcellular location is the cytoplasm. It localises to the nucleus. Transcription repressor involved in the exit of embryonic stem cells (ESCs) from self-renewal. Acts by repressing expression of KLF4. The chain is Zinc finger protein 706 from Homo sapiens (Human).